We begin with the raw amino-acid sequence, 230 residues long: Probable septum site-determining protein MinC (230 aa).

Belongs to the MinC family. In terms of assembly, interacts with MinD and FtsZ.

Its function is as follows. Cell division inhibitor that blocks the formation of polar Z ring septums. Rapidly oscillates between the poles of the cell to destabilize FtsZ filaments that have formed before they mature into polar Z rings. Prevents FtsZ polymerization. The polypeptide is Probable septum site-determining protein MinC (Rhodopseudomonas palustris (strain BisA53)).